The chain runs to 379 residues: tRNA-specific 2-thiouridylase MnmA (379 aa).

ATP contacts are provided by residues A6–S13 and L32. Catalysis depends on C101, which acts as the Nucleophile. An intrachain disulfide couples C101 to C199. G125 is an ATP binding site. Residues K148–Q150 are interaction with tRNA. Catalysis depends on C199, which acts as the Cysteine persulfide intermediate.

The protein belongs to the MnmA/TRMU family.

It is found in the cytoplasm. It catalyses the reaction S-sulfanyl-L-cysteinyl-[protein] + uridine(34) in tRNA + AH2 + ATP = 2-thiouridine(34) in tRNA + L-cysteinyl-[protein] + A + AMP + diphosphate + H(+). Functionally, catalyzes the 2-thiolation of uridine at the wobble position (U34) of tRNA, leading to the formation of s(2)U34. The polypeptide is tRNA-specific 2-thiouridylase MnmA (Arthrobacter sp. (strain FB24)).